A 247-amino-acid chain; its full sequence is MQLQVARHRPGTGEDRLMLEARKLVKSYALPGQPPLKILDGIDLSVAPGEMVTVIGASGSGKTTLLNLLGTLDTPDEGELIFDGSPVFQGSRCLLSKKELAAFRNRKIGFVFQFHHLLSDFTALENVAMAEFIGTGKLKPAKERAAVLLEKLGLKARLDHLPSELSGGEQQRVAIARALMNKPKLVLADEPSGNLDSRNSRMLYELMASLSKERQTSFVIVTHNEEFAATADRCLHMQDGRLQACGG.

The ABC transporter domain occupies 19–247; that stretch reads LEARKLVKSY…QDGRLQACGG (229 aa). 56 to 63 contributes to the ATP binding site; it reads GASGSGKT.

It belongs to the ABC transporter superfamily. Lipoprotein translocase (TC 3.A.1.125) family. As to quaternary structure, the complex is composed of two ATP-binding proteins (LolD) and two transmembrane proteins (LolC and LolE).

The protein resides in the cell inner membrane. Part of the ABC transporter complex LolCDE involved in the translocation of mature outer membrane-directed lipoproteins, from the inner membrane to the periplasmic chaperone, LolA. Responsible for the formation of the LolA-lipoprotein complex in an ATP-dependent manner. The chain is Lipoprotein-releasing system ATP-binding protein LolD 2 from Chlorobaculum tepidum (strain ATCC 49652 / DSM 12025 / NBRC 103806 / TLS) (Chlorobium tepidum).